The following is a 1705-amino-acid chain: Homeobox-DDT domain protein RLT1 (1705 aa).

Disordered regions lie at residues 1 to 53 (MEMG…QLET), 118 to 167 (ELPA…EYET), 237 to 267 (HDPRPRRSHAAARSFHEQQSLDDPSSFTPNM), 296 to 322 (GPVPRSYVTPGHASRNCSTSQQDMPSP), and 352 to 414 (GVRK…RKEE). Positions 39–98 (VKPKRQMKTPFQLETLEKVYSEEKYPSEATRAELSEKLDLSDRQLQMWFCHRRLKDKKDG) form a DNA-binding region, homeobox. Residues 136-159 (GSESGCSPYSNSRRNFASGSSSSR) show a composition bias toward low complexity. Polar residues-rich tracts occupy residues 253-265 (EQQSLDDPSSFTP) and 310-319 (RNCSTSQQDM). Residues 549 to 608 (DETVGNLLMVWRFLISFSDVLDLWPFTLDEFIQAFHDYDSRLLGEIHVTLLRSIIRDVED) enclose the DDT domain. Positions 731 to 800 (GTVKFAAFHV…APSTYCVRAP (70 aa)) constitute an HTH HARE-type domain. Disordered regions lie at residues 1028–1053 (TRERDSFDRDPSQLLDETKPLEDLSN), 1198–1229 (VNHSPTDSVSPSSSAISGSNSDSMETSTSIRV), 1441–1502 (PEDE…KAQS), 1561–1635 (PKSE…FVDY), and 1652–1705 (AIEE…SSDS). The segment covering 1201 to 1220 (SPTDSVSPSSSAISGSNSDS) has biased composition (low complexity). Residues 1455–1465 (SPFKGKGPREQ) are compositionally biased toward basic and acidic residues. Acidic residues-rich tracts occupy residues 1565 to 1574 (EVEEDEEEEE), 1611 to 1628 (VDDESDNSVGVESEDEDG), and 1669 to 1684 (GEDDAEMSESSEDDDV).

As to quaternary structure, interacts with CHR11 and CHR17. Interacts (via the DDT domain) with CHR11 (via C-terminus). Highly expressed in growing tissues such as inflorescence and flower meristems, young leaves and floral organs. Expressed in roots, rosette and cauline leaves, stems, flowers, inflorescences and siliques.

Its subcellular location is the nucleus. Functionally, transcriptional regulator required for the maintenance of the plant vegetative phase. In association with CHR11 or CHR17 may prevent the early activation of the vegetative-to-reproductive transition by regulating key genes that contribute to flower timing, such as FT, SEP1, SEP3, AGL8/FUL, SOC1 and FLC. This is Homeobox-DDT domain protein RLT1 from Arabidopsis thaliana (Mouse-ear cress).